We begin with the raw amino-acid sequence, 139 residues long: Holo-[acyl-carrier-protein] synthase (139 aa).

Mg(2+)-binding residues include Asp8 and Glu61.

This sequence belongs to the P-Pant transferase superfamily. AcpS family. Mg(2+) serves as cofactor.

Its subcellular location is the cytoplasm. It carries out the reaction apo-[ACP] + CoA = holo-[ACP] + adenosine 3',5'-bisphosphate + H(+). In terms of biological role, transfers the 4'-phosphopantetheine moiety from coenzyme A to a Ser of acyl-carrier-protein. In Nitrobacter hamburgensis (strain DSM 10229 / NCIMB 13809 / X14), this protein is Holo-[acyl-carrier-protein] synthase.